A 397-amino-acid polypeptide reads, in one-letter code: L-asparaginase-like protein CG4372 (397 aa).

Residues 1–22 (MLAQSCCLRLLILLLLFTTIGS) form the signal peptide. Intrachain disulfides connect C90–C95, C189–C205, and C344–C371.

This sequence belongs to the Ntn-hydrolase family.

This is L-asparaginase-like protein CG4372 from Drosophila melanogaster (Fruit fly).